A 247-amino-acid chain; its full sequence is UPF0259 membrane protein BUAPTUC7_273 (247 aa).

Helical transmembrane passes span 20-40, 85-105, 114-134, 137-157, 188-208, and 218-238; these read IGAI…IDMF, IMES…LISF, IVSS…LNFL, FIIQ…SIIL, IIGP…MLLA, and LFLI…IYLF.

It belongs to the UPF0259 family.

The protein resides in the cell membrane. This is UPF0259 membrane protein BUAPTUC7_273 from Buchnera aphidicola subsp. Acyrthosiphon pisum (strain Tuc7).